The primary structure comprises 352 residues: Peptide chain release factor 1 (352 aa).

The residue at position 233 (Q233) is an N5-methylglutamine. A disordered region spans residues 288–309; that stretch reads NAKDRKEQVGSGDRSERIRTYN. Over residues 289–306 the composition is skewed to basic and acidic residues; the sequence is AKDRKEQVGSGDRSERIR.

It belongs to the prokaryotic/mitochondrial release factor family. In terms of processing, methylated by PrmC. Methylation increases the termination efficiency of RF1.

The protein resides in the cytoplasm. Functionally, peptide chain release factor 1 directs the termination of translation in response to the peptide chain termination codons UAG and UAA. The protein is Peptide chain release factor 1 (prfA) of Helicobacter pylori (strain J99 / ATCC 700824) (Campylobacter pylori J99).